The chain runs to 216 residues: MOB kinase activator 3C (216 aa).

The Zn(2+) site is built by Cys-82, Cys-87, His-164, and His-169.

Belongs to the MOB1/phocein family.

In terms of biological role, may regulate the activity of kinases. This Mus musculus (Mouse) protein is MOB kinase activator 3C (Mob3c).